A 181-amino-acid chain; its full sequence is ATP-dependent protease subunit HslV (181 aa).

Thr-7 is a catalytic residue. The Na(+) site is built by Ala-162, Cys-165, and Thr-168.

The protein belongs to the peptidase T1B family. HslV subfamily. In terms of assembly, a double ring-shaped homohexamer of HslV is capped on each side by a ring-shaped HslU homohexamer. The assembly of the HslU/HslV complex is dependent on binding of ATP.

It localises to the cytoplasm. The enzyme catalyses ATP-dependent cleavage of peptide bonds with broad specificity.. With respect to regulation, allosterically activated by HslU binding. In terms of biological role, protease subunit of a proteasome-like degradation complex believed to be a general protein degrading machinery. The chain is ATP-dependent protease subunit HslV from Coxiella burnetii (strain RSA 331 / Henzerling II).